Reading from the N-terminus, the 151-residue chain is Kinetoplast-associated protein 1 (151 aa).

The propeptide occupies 1–9 (MLRVSVRSL). A disordered region spans residues 13–151 (ASSKAGSKAA…KKGAAKKAHK (139 aa)). Low complexity-rich tracts occupy residues 15-49 (SKAG…VPPV), 70-91 (AAAA…TPAK), and 101-111 (SKPSAPKQAAG). Positions 112-151 (KMRKAAGKAQRKIKAAARKAAPKKMAKSFGKKGAAKKAHK) are enriched in basic residues.

The protein belongs to the KAP family. As to quaternary structure, associates with the kinetoplast DNA network.

It is found in the mitochondrion matrix. Its subcellular location is the kinetoplast. Its function is as follows. Histone H1-like DNA-binding protein involved in the organization and segregation of kinetoplast DNA (kDNA). The mitochondrial DNA of kinetoplastid protozoa consists of about 5,000 minicircles and 20 to 30 maxicircles. These circular DNAs are held together by catenation into a highly organized compact disk structure referred to as a kinetoplast DNA (kDNA) network. Binds preferentially to a specific fragment of minicircle DNA and is able to compact kDNA networks through DNA charge neutralization and condensation. In Crithidia fasciculata, this protein is Kinetoplast-associated protein 1 (KAP4).